The following is an 858-amino-acid chain: Leucine--tRNA ligase (858 aa).

The 'HIGH' region signature appears at 42-52 (PYPSGRLHMGH). The 'KMSKS' region signature appears at 618 to 622 (KMSKS). Residue Lys-621 coordinates ATP.

Belongs to the class-I aminoacyl-tRNA synthetase family.

The protein localises to the cytoplasm. The catalysed reaction is tRNA(Leu) + L-leucine + ATP = L-leucyl-tRNA(Leu) + AMP + diphosphate. This is Leucine--tRNA ligase from Aliivibrio salmonicida (strain LFI1238) (Vibrio salmonicida (strain LFI1238)).